Reading from the N-terminus, the 338-residue chain is Phenylalanine--tRNA ligase alpha subunit (338 aa).

Glutamate 252 provides a ligand contact to Mg(2+).

It belongs to the class-II aminoacyl-tRNA synthetase family. Phe-tRNA synthetase alpha subunit type 1 subfamily. Tetramer of two alpha and two beta subunits. Requires Mg(2+) as cofactor.

The protein localises to the cytoplasm. The catalysed reaction is tRNA(Phe) + L-phenylalanine + ATP = L-phenylalanyl-tRNA(Phe) + AMP + diphosphate + H(+). In Mycoplasmoides gallisepticum (strain R(low / passage 15 / clone 2)) (Mycoplasma gallisepticum), this protein is Phenylalanine--tRNA ligase alpha subunit.